Here is a 2111-residue protein sequence, read N- to C-terminus: Glutamate synthase [NADH] (2111 aa).

Catalysis depends on Cys69, which acts as the Nucleophile. The 401-residue stretch at 69–469 (CGVGFTCHIK…PGRMLLVDTK (401 aa)) folds into the Glutamine amidotransferase type-2 domain. Residues 969–990 (GGKSNTGEGGEDPARSQRLANG) are disordered. Residue 1139–1191 (VAETHQTLVLNDLRGRVVIQTDGQIRTGRDVAIACLLGAEEWGFATTPLIALG) coordinates FMN. The [3Fe-4S] cluster site is built by Cys1192, Cys1198, and Cys1203.

This sequence belongs to the glutamate synthase family. As to quaternary structure, homotrimer. [3Fe-4S] cluster is required as a cofactor. The cofactor is FAD. FMN serves as cofactor.

It is found in the cytoplasm. The enzyme catalyses 2 L-glutamate + NAD(+) = L-glutamine + 2-oxoglutarate + NADH + H(+). It participates in amino-acid biosynthesis; L-glutamate biosynthesis via GLT pathway; L-glutamate from 2-oxoglutarate and L-glutamine (NAD(+) route): step 1/1. It functions in the pathway energy metabolism; nitrogen metabolism. Its activity is regulated as follows. In the presence of 10 mM allantoin, the activity is reduced more than 25%. In terms of biological role, forms L-glutamate from L-glutamine and 2-oxoglutarate. Represents an alternative pathway to L-glutamate dehydrogenase for the biosynthesis of L-glutamate. Participates with glutamine synthetase in ammonia assimilation processes. The enzyme is specific for NADH, L-glutamine and 2-oxoglutarate. The chain is Glutamate synthase [NADH] (glt1) from Schizosaccharomyces pombe (strain 972 / ATCC 24843) (Fission yeast).